Consider the following 286-residue polypeptide: Homoserine kinase (286 aa).

78 to 88 (PLARGLGSSSS) is a binding site for ATP.

The protein belongs to the GHMP kinase family. Homoserine kinase subfamily.

The protein localises to the cytoplasm. The enzyme catalyses L-homoserine + ATP = O-phospho-L-homoserine + ADP + H(+). Its pathway is amino-acid biosynthesis; L-threonine biosynthesis; L-threonine from L-aspartate: step 4/5. In terms of biological role, catalyzes the ATP-dependent phosphorylation of L-homoserine to L-homoserine phosphate. This chain is Homoserine kinase, found in Streptococcus equi subsp. zooepidemicus (strain H70).